A 687-amino-acid polypeptide reads, in one-letter code: MQNDRSRWKTEGHSSEVHEDFLRNSVQRRNQLEKILFSYNNLHRLDPSYGEIVQRAFESNDPIALWNFENEVLLNSKDVDDLMQQQFAAPVQNNQCPNPYQNCGYQNNLVSTLDASFKVHPFAQHGNYMPPPAQFASNPNVFPQPVPPYTMDLAASNSGFAHPQIVNQPMHPHVPVGSQNYNPPQFVPAPPTMMPVGAVMVSQGSYSMSPPQIDTSKPPSGYGFSSPIFPSPSYSQYSGPPANEGFPDIIYDNNGVAYCRVVSAPVCVVSMSQSGSSVCSSQSFSSGQSDISMSSRPPINGSSVGNGSLSPMTDSVREESEDEDYGTLTPVGQQDCDLDSVDTESVANEPEPYSSTMSEMPPLDDVDDIMENLDLSKTLIEPETLEHSDNMSVVEIKSEPVSEMTTDSLIVDDDRDTSISEIIKYLDTSDDVLESWQEATGRKKCFVPQKTQKLVYPLPLSKVEKPLQKCQQTLAASTIDEDSKEASTIALPDARKKLTKKEKRLMAAQKANQLETDDDVLEAAYRERQKHVEQAGGDYSSSGQKDQKKKRGKRPVSNPPPSLISPQILHAVQMAIANRAKKISESGRPIFHENFSYQKFYETVDTFVKTWEENSNEMNKVLQFIEKRILAFKMVQRPQSLSRITIYEQLQLNLPPAILPELCFLAGLTSDSTDKLEYYEEIFFNLF.

Low complexity predominate over residues 277–295; that stretch reads SVCSSQSFSSGQSDISMSS. Disordered stretches follow at residues 277–337, 342–361, and 531–564; these read SVCS…QDCD, DTES…SEMP, and HVEQ…PSLI. The span at 300-313 shows a compositional bias: polar residues; sequence NGSSVGNGSLSPMT.

This is an uncharacterized protein from Caenorhabditis elegans.